The primary structure comprises 1357 residues: Regulator of V-ATPase in vacuolar membrane protein 1 (1357 aa).

8 WD repeats span residues 98 to 134, 142 to 182, 190 to 239, 384 to 423, 431 to 470, 595 to 636, 638 to 679, and 898 to 939; these read HDDT…GVYQ, KQPK…GEQA, PHPK…KNHT, GHNK…HGVS, QTES…KEDS, INTG…LEYE, TFHN…YTNN, and QKSI…RIAY. The interval 1243–1357 is disordered; the sequence is GSPSASDIES…ITKNLLDDFV (115 aa). S1244 and S1248 each carry phosphoserine. The span at 1272-1288 shows a compositional bias: low complexity; sequence STSSNSLAQSSSSAPRS. Positions 1320 to 1332 are enriched in basic and acidic residues; it reads SENRKDKLSKDIL.

Component of the RAVE complex composed of RAV1, RAV2 and CBF3D/SKP1. Within the complex, it interacts directly with RAV2 and CBF3D. Interacts with the V-ATPase V1 subunits VMA1, VMA2 and VMA8.

It is found in the endomembrane system. Functionally, component of the RAVE complex, which is required for stable assembly of the vacuolar ATPase complex V-ATPase under many conditions. Required for transport between the early endosome and the late endosome/prevacuolar compartment (PVC), suggesting that assembly of vacuolar ATPase at the early endosome is required for transport from the early endosome to the PVC. This chain is Regulator of V-ATPase in vacuolar membrane protein 1 (RAV1), found in Saccharomyces cerevisiae (strain ATCC 204508 / S288c) (Baker's yeast).